Here is a 203-residue protein sequence, read N- to C-terminus: E3 ubiquitin-protein ligase RNF152 (203 aa).

The segment at 12 to 55 adopts an RING-type zinc-finger fold; the sequence is CQICFNYYSPRRRPKLLDCKHTCCSVCLQQMRTSQKDVRCPWCR. Positions 106–165 are necessary for interaction with RRAGA; that stretch reads ISKERTLLPGDMGCRLLPGSQQKSLTVVTIPAEQQPLQGGAPQEAVEEEPDRRGVAKSST. Residues 140-159 are disordered; the sequence is QPLQGGAPQEAVEEEPDRRG. The chain crosses the membrane as a helical span at residues 167–187; that stretch reads SGVCTVILVACVLVFLLGIVL.

Belongs to the RNF152 family. In terms of assembly, interacts with RRAGA (inactive GDP-bound form); stimulated by amino acid starvation. Interacts with SEC16A. In terms of processing, ubiquitinated. Autoubiquitinated in vitro, leading to its degradation by the proteasome.

It is found in the lysosome membrane. The catalysed reaction is S-ubiquitinyl-[E2 ubiquitin-conjugating enzyme]-L-cysteine + [acceptor protein]-L-lysine = [E2 ubiquitin-conjugating enzyme]-L-cysteine + N(6)-ubiquitinyl-[acceptor protein]-L-lysine.. It participates in protein modification; protein ubiquitination. Its function is as follows. E3 ubiquitin-protein ligase that acts as a negative regulator of mTORC1 signaling by mediating ubiquitination of RagA/RRAGA and RHEB. Catalyzes 'Lys-63'-linked polyubiquitination of RagA/RRAGA in response to amino acid starvation, thereby regulating mTORC1 signaling. Also mediates monoubiquitination of RHEB, promoting its association with the TSC-TBC complex and subsequent inhibition. Also mediates 'Lys-48'-linked polyubiquitination of target proteins and their subsequent targeting to the proteasome for degradation. Induces apoptosis when overexpressed. The protein is E3 ubiquitin-protein ligase RNF152 of Rattus norvegicus (Rat).